The chain runs to 513 residues: Glycogen synthase (513 aa).

ADP-alpha-D-glucose is bound at residue Lys-47.

It belongs to the glycosyltransferase 1 family. Bacterial/plant glycogen synthase subfamily.

It catalyses the reaction [(1-&gt;4)-alpha-D-glucosyl](n) + ADP-alpha-D-glucose = [(1-&gt;4)-alpha-D-glucosyl](n+1) + ADP + H(+). Its pathway is glycan biosynthesis; glycogen biosynthesis. Its function is as follows. Synthesizes alpha-1,4-glucan chains using ADP-glucose. This chain is Glycogen synthase, found in Pseudomonas aeruginosa (strain ATCC 15692 / DSM 22644 / CIP 104116 / JCM 14847 / LMG 12228 / 1C / PRS 101 / PAO1).